The following is a 513-amino-acid chain: Cytochrome P450 86A1 (513 aa).

The chain crosses the membrane as a helical span at residues 7-27; it reads ILTGYAVAALSVYALWFYFLS. Position 456 (Cys456) interacts with heme.

It belongs to the cytochrome P450 family. It depends on heme as a cofactor. In terms of tissue distribution, expressed in roots.

The protein resides in the membrane. It catalyses the reaction an omega-methyl-long-chain fatty acid + reduced [NADPH--hemoprotein reductase] + O2 = an omega-hydroxy-long-chain fatty acid + oxidized [NADPH--hemoprotein reductase] + H2O + H(+). In terms of biological role, catalyzes the omega-hydroxylation of various fatty acids (FA). Acts on saturated and unsaturated fatty acids with chain lengths from C12 to C18 but not on hexadecane. The protein is Cytochrome P450 86A1 (CYP86A1) of Arabidopsis thaliana (Mouse-ear cress).